The sequence spans 86 residues: Small ribosomal subunit protein bS20 (86 aa).

The disordered stretch occupies residues 1-25; that stretch reads MANIKSQMKRIRTNEAARKRNQSVK.

Belongs to the bacterial ribosomal protein bS20 family.

Its function is as follows. Binds directly to 16S ribosomal RNA. This chain is Small ribosomal subunit protein bS20, found in Nocardia farcinica (strain IFM 10152).